We begin with the raw amino-acid sequence, 65 residues long: DNA gyrase inhibitor YacG (65 aa).

Residues Cys8, Cys11, Cys27, and Cys31 each contribute to the Zn(2+) site. The segment at 43–65 (SYRIPDTGKDSEKQENDPSGSEK) is disordered. Residues 48–65 (DTGKDSEKQENDPSGSEK) show a composition bias toward basic and acidic residues.

It belongs to the DNA gyrase inhibitor YacG family. As to quaternary structure, interacts with GyrB. The cofactor is Zn(2+).

Inhibits all the catalytic activities of DNA gyrase by preventing its interaction with DNA. Acts by binding directly to the C-terminal domain of GyrB, which probably disrupts DNA binding by the gyrase. The chain is DNA gyrase inhibitor YacG from Nitrosospira multiformis (strain ATCC 25196 / NCIMB 11849 / C 71).